The chain runs to 952 residues: Disintegrin and metalloproteinase domain-containing protein adm-2 (952 aa).

Residues 1–672 lie on the Extracellular side of the membrane; that stretch reads MTDTLDLKLS…NEAYRFRGIT (672 aa). Asn125 and Asn301 each carry an N-linked (GlcNAc...) asparagine glycan. The region spanning 177-373 is the Peptidase M12B domain; sequence RFVELALVAD…GIDLCLFNEP (197 aa). Disulfide bonds link Cys287–Cys368, Cys330–Cys352, and Cys332–Cys337. A Zn(2+)-binding site is contributed by His312. Glu313 is a catalytic residue. 2 residues coordinate Zn(2+): His316 and His322. The Disintegrin domain occupies 379 to 466; sequence DAKCGNGIVE…DCPADFFVQN (88 aa). A glycan (N-linked (GlcNAc...) asparagine) is linked at Asn406. Disulfide bonds link Cys438-Cys458, Cys624-Cys634, Cys628-Cys640, and Cys642-Cys651. In terms of domain architecture, EGF-like spans 620 to 652; the sequence is VTAQCLDNCNFRGVCNNVGNCHCERGFGGIACE. Residues 673–693 traverse the membrane as a helical segment; it reads LSSTFLVFFCLFGIFIGGLCV. At 694-952 the chain is on the cytoplasmic side; that stretch reads YYRVKRKRNL…AAIFDQKLKK (259 aa). Disordered regions lie at residues 778 to 809 and 829 to 938; these read IPMV…ERAT and SFNT…EKVD. Composition is skewed to basic and acidic residues over residues 798-809 and 849-873; these read AEKEEQNQERAT and PSDD…DRLN. Residues 905-914 show a composition bias toward pro residues; sequence QAPPPPPPAH. Residues 925 to 938 are compositionally biased toward basic and acidic residues; the sequence is KVSEDAAATEEKVD.

Requires Zn(2+) as cofactor. Expressed in hyp7 large epidermal syncytium (punctate distribution), seam cell syncytia, anterior epidermis, neurons located in the head, tail and central body, proximal oogenic cells (levels increasing in maturing oocytes) and myoepithelial cells of the spermatheca (at protein level). Not detected in mature sperm cells.

The protein localises to the cell membrane. Its subcellular location is the endosome membrane. It localises to the lysosome membrane. Metalloprotease that cleaves and releases a number of molecules. Negative regulator of lrp-1 protein levels, potentially by influencing its endosomal trafficking. Involved in regulating the molting process. The protein is Disintegrin and metalloproteinase domain-containing protein adm-2 of Caenorhabditis elegans.